The sequence spans 834 residues: Glycerol-3-phosphate acyltransferase (834 aa).

Residues 309–314 carry the HXXXXD motif motif; that stretch reads CHRSHI.

The protein belongs to the GPAT/DAPAT family.

It localises to the cell inner membrane. It catalyses the reaction sn-glycerol 3-phosphate + an acyl-CoA = a 1-acyl-sn-glycero-3-phosphate + CoA. Its pathway is phospholipid metabolism; CDP-diacylglycerol biosynthesis; CDP-diacylglycerol from sn-glycerol 3-phosphate: step 1/3. In Pseudomonas aeruginosa (strain UCBPP-PA14), this protein is Glycerol-3-phosphate acyltransferase.